We begin with the raw amino-acid sequence, 110 residues long: Carboxysome shell protein CsoS1B (110 aa).

A BMC domain is found at alanine 8–proline 93.

It belongs to the bacterial microcompartments protein family. CsoS1 subfamily. Homohexamer with a small central pore. Interacts with the N-terminus (residues 1-136) of RuBisCO (CbbL).

It localises to the carboxysome. In terms of biological role, one of shell proteins of the carboxysome, a polyhedral inclusion where RuBisCO (ribulose bisphosphate carboxylase, ccbL-ccbS) is sequestered. Assembles into hexamers which make sheets that form the facets of the polyhedral carboxysome. The shell probably limits the diffusion of CO(2) into and out of the carboxysome. There are estimated to be 540 CsoS1B proteins per carboxysome. Unlike beta-carboxysomes, alpha-carboxysomes (Cb) can form without cargo protein. CsoS2 is essential for Cb formation and is also capable of targeting foreign proteins to the Cb. The Cb shell assembles with the aid of CsoS2; CsoS1A, CsoS1B and CsoS1C form the majority of the shell while CsoS4A and CsoS4B form vertices. CsoS1D forms pseudohexamers that probably control metabolite flux into and out of the shell. The chain is Carboxysome shell protein CsoS1B from Halothiobacillus neapolitanus (strain ATCC 23641 / c2) (Thiobacillus neapolitanus).